Reading from the N-terminus, the 643-residue chain is 1-deoxy-D-xylulose-5-phosphate synthase (643 aa).

Residues His72 and 113–115 (GHA) each bind thiamine diphosphate. Asp144 contributes to the Mg(2+) binding site. Thiamine diphosphate contacts are provided by residues 145–146 (GA), Asn174, Tyr287, and Glu370. Asn174 provides a ligand contact to Mg(2+).

Belongs to the transketolase family. DXPS subfamily. As to quaternary structure, homodimer. Mg(2+) is required as a cofactor. Thiamine diphosphate serves as cofactor.

The catalysed reaction is D-glyceraldehyde 3-phosphate + pyruvate + H(+) = 1-deoxy-D-xylulose 5-phosphate + CO2. Its pathway is metabolic intermediate biosynthesis; 1-deoxy-D-xylulose 5-phosphate biosynthesis; 1-deoxy-D-xylulose 5-phosphate from D-glyceraldehyde 3-phosphate and pyruvate: step 1/1. Functionally, catalyzes the acyloin condensation reaction between C atoms 2 and 3 of pyruvate and glyceraldehyde 3-phosphate to yield 1-deoxy-D-xylulose-5-phosphate (DXP). This Synechococcus sp. (strain CC9605) protein is 1-deoxy-D-xylulose-5-phosphate synthase.